The chain runs to 387 residues: Decapping nuclease RAI1 (387 aa).

Glu-172 is a binding site for a divalent metal cation. Ser-198 carries the post-translational modification Phosphoserine. Residue Glu-221 coordinates substrate. A divalent metal cation-binding residues include Asp-223, Glu-241, and Leu-242. The substrate site is built by Lys-243 and Gln-267. The interaction with RAT1 stretch occupies residues 273–387 (IPRIIYGFKD…GFKEWRKSLK (115 aa)).

Belongs to the DXO/Dom3Z family. As to quaternary structure, interacts with RAT1, RTT103 and pre-60S ribosomal subunits. Interacts with RAT1; the interaction is direct, stabilizes RAT1 protein structure and stimulates its exoribonuclease activity. The interaction also stimulates RAI1 pyrophosphohydrolase activity, probably by recruiting it to mRNA substrates. A divalent metal cation serves as cofactor.

The protein resides in the nucleus. It carries out the reaction a 5'-end NAD(+)-phospho-ribonucleoside in mRNA + H2O = a 5'-end phospho-ribonucleoside in mRNA + NAD(+) + H(+). The enzyme catalyses a 5'-end (N(7)-methyl 5'-triphosphoguanosine)-ribonucleoside-ribonucleotide in mRNA + H2O = a (N(7)-methyl 5'-triphosphoguanosine)-nucleoside + a 5'-end phospho-ribonucleoside in mRNA + H(+). The catalysed reaction is a 5'-end triphospho-ribonucleoside in mRNA + H2O = a 5'-end phospho-ribonucleoside in mRNA + diphosphate + H(+). Decapping enzyme for NAD-capped RNAs: specifically hydrolyzes the nicotinamide adenine dinucleotide (NAD) cap from a subset of RNAs by removing the entire NAD moiety from the 5'-end of an NAD-capped RNA. The NAD-cap is present at the 5'-end of some RNAs and snoRNAs. In contrast to the canonical 5'-end N7 methylguanosine (m7G) cap, the NAD cap promotes mRNA decay. Also acts as a non-canonical decapping enzyme that removes the entire cap structure of m7G capped or incompletely capped RNAs. Has decapping activity toward incomplete 5'-end m7G cap mRNAs such as unmethylated 5'-end-capped RNA (cap0), while it has no activity toward 2'-O-ribose methylated m7G cap (cap1). Also possesses RNA 5'-pyrophosphohydrolase activity by hydrolyzing the 5'-end triphosphate to release pyrophosphates. Stimulates exoribonuclease activity of RAT1, allowing it to degrade RNAs with stable secondary structure more effectively. Required for the processing of nuclear mRNA and rRNA precursors. May promote termination of transcription by RNA polymerase II. The chain is Decapping nuclease RAI1 from Saccharomyces cerevisiae (strain ATCC 204508 / S288c) (Baker's yeast).